Reading from the N-terminus, the 253-residue chain is Succinate dehydrogenase [ubiquinone] iron-sulfur subunit, mitochondrial (253 aa).

The 2Fe-2S ferredoxin-type domain maps to 23-114 (FKIYRWNPDK…TTKIYPLPHM (92 aa)). The [2Fe-2S] cluster site is built by Cys-74, Cys-79, Cys-82, and Cys-94. The region spanning 156–186 (DRKKLDGLYECILCACCSTSCPSYWWNQEEY) is the 4Fe-4S ferredoxin-type domain. Cys-166, Cys-169, and Cys-172 together coordinate [4Fe-4S] cluster. Cys-176 contributes to the [3Fe-4S] cluster binding site. Trp-181 contacts a ubiquinone. Cys-223 and Cys-229 together coordinate [3Fe-4S] cluster. Cys-233 provides a ligand contact to [4Fe-4S] cluster.

It belongs to the succinate dehydrogenase/fumarate reductase iron-sulfur protein family. Component of complex II composed of four subunits: a flavoprotein (FP), an iron-sulfur protein (IP), and a cytochrome b composed of a large and a small subunit. The cofactor is [2Fe-2S] cluster. [3Fe-4S] cluster serves as cofactor. [4Fe-4S] cluster is required as a cofactor.

Its subcellular location is the mitochondrion inner membrane. It carries out the reaction a quinone + succinate = fumarate + a quinol. The protein operates within carbohydrate metabolism; tricarboxylic acid cycle; fumarate from succinate (eukaryal route): step 1/1. Iron-sulfur protein (IP) subunit of succinate dehydrogenase (SDH) that is involved in complex II of the mitochondrial electron transport chain and is responsible for transferring electrons from succinate to ubiquinone (coenzyme Q). The polypeptide is Succinate dehydrogenase [ubiquinone] iron-sulfur subunit, mitochondrial (SDH2) (Candida glabrata (strain ATCC 2001 / BCRC 20586 / JCM 3761 / NBRC 0622 / NRRL Y-65 / CBS 138) (Yeast)).